The primary structure comprises 473 residues: GTPase Der (473 aa).

EngA-type G domains lie at phenylalanine 3–arginine 167 and leucine 203–asparagine 378. GTP contacts are provided by residues glycine 9–serine 16, aspartate 56–leucine 60, asparagine 119–glutamate 122, glycine 209–serine 216, aspartate 256–methionine 260, and asparagine 321–aspartate 324. The KH-like domain maps to lysine 379–glutamate 463.

This sequence belongs to the TRAFAC class TrmE-Era-EngA-EngB-Septin-like GTPase superfamily. EngA (Der) GTPase family. In terms of assembly, associates with the 50S ribosomal subunit.

GTPase that plays an essential role in the late steps of ribosome biogenesis. The polypeptide is GTPase Der (Rhizobium etli (strain CIAT 652)).